A 452-amino-acid chain; its full sequence is Phosphoglucosamine mutase (452 aa).

Ser98 functions as the Phosphoserine intermediate in the catalytic mechanism. Mg(2+)-binding residues include Ser98, Asp239, Asp241, and Asp243. Ser98 bears the Phosphoserine mark.

It belongs to the phosphohexose mutase family. It depends on Mg(2+) as a cofactor. Activated by phosphorylation.

The catalysed reaction is alpha-D-glucosamine 1-phosphate = D-glucosamine 6-phosphate. Catalyzes the conversion of glucosamine-6-phosphate to glucosamine-1-phosphate. In Anaplasma marginale (strain St. Maries), this protein is Phosphoglucosamine mutase.